The sequence spans 849 residues: Period circadian protein (849 aa).

Polar residues predominate over residues 1–13 (MNNMDGSENNAKV). A disordered region spans residues 1-79 (MNNMDGSENN…LKKKKQVETL (79 aa)). Composition is skewed to low complexity over residues 14 to 27 (SDSA…NSQS) and 35 to 58 (STHS…SSSS). A Nuclear localization signal motif is present at residues 63–74 (DQKKEKELKKKK). PAS domains follow at residues 166 to 296 (NGFS…QAVP) and 314 to 416 (FVIR…YIIE). Residues 680–746 (NNTPSVYEKP…VSTSSQWSSS (67 aa)) are disordered. The segment covering 706 to 720 (NKHHCPSSRQFRRKQ) has biased composition (basic residues). Residues 735-746 (NPVSTSSQWSSS) are compositionally biased toward low complexity.

As to quaternary structure, forms a heterodimer with timeless (TIM); the complex then translocates into the nucleus. Phosphorylated with a circadian rhythmicity.

The protein localises to the nucleus. Its function is as follows. Involved in the generation of biological rhythms. The biological cycle depends on the rhythmic formation and nuclear localization of the tim-per complex. Light induces the degradation of tim, which promotes elimination of per. Nuclear activity of the heterodimer coordinatively regulates per and tim transcription negative feedback loop. Behaves as a negative element in circadian transcriptional loop. Does not appear to bind DNA, suggesting indirect transcriptional inhibition. Expression exhibits prominent circadian variation in adult heads and in particular in the photoreceptor nuclei. In Antheraea pernyi (Chinese oak silk moth), this protein is Period circadian protein (per).